Consider the following 188-residue polypeptide: GTP cyclohydrolase 1 (188 aa).

Zn(2+)-binding residues include Cys78, His81, and Cys150.

It belongs to the GTP cyclohydrolase I family. Homomer.

The enzyme catalyses GTP + H2O = 7,8-dihydroneopterin 3'-triphosphate + formate + H(+). Its pathway is cofactor biosynthesis; 7,8-dihydroneopterin triphosphate biosynthesis; 7,8-dihydroneopterin triphosphate from GTP: step 1/1. In Geobacillus sp. (strain WCH70), this protein is GTP cyclohydrolase 1.